The chain runs to 75 residues: Venom serine protease inhibitor BiVSPI (75 aa).

Residues 1-20 form the signal peptide; sequence MSRILFVFLAVMAIFSTSFG. Disulfide bonds link Cys23-Cys55, Cys32-Cys51, Cys35-Cys47, Cys39-Cys75, and Cys57-Cys69. The TIL domain occupies 23–75; sequence CGLNEEFKSCGSCEPTCAKPRVTICTMECKIGCQCKSGYLRNGEGTCVLPEKC.

It belongs to the serine protease inhibitor-like (TIL domain-containing) family. May be O-glycosylated. In terms of tissue distribution, expressed by the venom gland (at protein level) and expressed in fat body.

It is found in the secreted. The protein resides in the target cell membrane. In terms of biological role, antimicrobial venom serine protease inhibitor. Exhibits inhibitory activity against chymotrypsin (IC(50)=19.56 nM, Ki=15.24 nM) and microbial serine proteases, such as subtilisin A (IC(50)=6.57 nM, Ki=6.83 nM) and proteinase K (IC(50)=7.11 nM, Ki=7.02 nM). Has not activity against trypsin, plasmin, tPA, thrombin, factor Xa or elastase. Binds and inhibits Gram-positive bacteria (B.subtilis (MIC=29.45 uM), B.thuringiensis (MIC=91.03 uM)) and the entomopathogenic fungus B.bassiana (MIC=30.09 uM) but not to E.coli. In Bombus ignitus (Bumblebee), this protein is Venom serine protease inhibitor BiVSPI.